We begin with the raw amino-acid sequence, 312 residues long: Acetyl-coenzyme A carboxylase carboxyl transferase subunit alpha (312 aa).

The CoA carboxyltransferase C-terminal domain occupies 36 to 286 (RLDKEVKSIY…KEYFLDALRT (251 aa)).

The protein belongs to the AccA family. In terms of assembly, acetyl-CoA carboxylase is a heterohexamer composed of biotin carboxyl carrier protein (AccB), biotin carboxylase (AccC) and two subunits each of ACCase subunit alpha (AccA) and ACCase subunit beta (AccD).

It localises to the cytoplasm. It catalyses the reaction N(6)-carboxybiotinyl-L-lysyl-[protein] + acetyl-CoA = N(6)-biotinyl-L-lysyl-[protein] + malonyl-CoA. The protein operates within lipid metabolism; malonyl-CoA biosynthesis; malonyl-CoA from acetyl-CoA: step 1/1. Functionally, component of the acetyl coenzyme A carboxylase (ACC) complex. First, biotin carboxylase catalyzes the carboxylation of biotin on its carrier protein (BCCP) and then the CO(2) group is transferred by the carboxyltransferase to acetyl-CoA to form malonyl-CoA. This chain is Acetyl-coenzyme A carboxylase carboxyl transferase subunit alpha, found in Helicobacter pylori (strain G27).